We begin with the raw amino-acid sequence, 395 residues long: Putative ankyrin repeat protein RF_0950 (395 aa).

7 ANK repeats span residues 3–32, 36–65, 69–98, 101–130, 134–166, 172–201, and 205–234; these read YQKELLIEAIQEDNLKEVQKLLQAGVNPNT, YGKLCIRSAINNENLDIVKVLLDYGADPNA, IKDPIILEAIRSRELGIINSLLKKGANPNV, RHENPIILSALPRGVNIVNTLLNNGADPNQ, NGNTALSIILERTGDINVDVTALLIEKVKEKAL, NGETCLHLAAQQGKIQMFDKYLDYYQTVNI, and AGNTPLYWSKLLGHTEISDMLNKRAEELNE. The 124-residue stretch at 272–395 folds into the Glutamine amidotransferase type-1 domain; sequence KTKLIYQGGD…YLKVPILKEK (124 aa). The active-site Nucleophile is the Cys377.

This Rickettsia felis (strain ATCC VR-1525 / URRWXCal2) (Rickettsia azadi) protein is Putative ankyrin repeat protein RF_0950.